A 1012-amino-acid chain; its full sequence is Structural polyprotein (1012 aa).

Asp-30 contacts a divalent metal cation. Positions 513–755 constitute a Peptidase S50 domain; the sequence is ADKGYEVVAN…AGRQYHLAMA (243 aa). Residue Ser-652 is the Nucleophile of the active site. Residue Lys-692 is part of the active site. The tract at residues 970-1012 is disordered; that stretch reads MEMKHRNPRRAPPKPKPKPNAPTQRPPGRLGRWIRTVSDEDLE. Over residues 975 to 986 the composition is skewed to basic residues; that stretch reads RNPRRAPPKPKP. The tract at residues 1003-1012 is interaction with VP1 protein; that stretch reads IRTVSDEDLE.

Homotrimer. A central divalent metal stabilizes the VP2 trimer. Interacts with host ITGA4/ITGB1. As to quaternary structure, homodimer. Interacts (via C-terminus) with VP1 in the cytoplasm. Interacts with VP2. In terms of processing, specific enzymatic cleavages yield mature proteins. The capsid assembly seems to be regulated by polyprotein processing. The protease VP4 cleaves itself off the polyprotein, thus releasing pre-VP2 and VP3 within the infected cell. During capsid assembly, the C-terminus of pre-VP2 is further processed by VP4, giving rise to VP2, the external capsid protein and three small peptides that all stay closely associated with the capsid.

It localises to the virion. It is found in the host cytoplasm. Its function is as follows. Capsid protein VP2 self assembles to form an icosahedral capsid with a T=13 symmetry, about 70 nm in diameter, and consisting of 260 VP2 trimers. The capsid encapsulates the genomic dsRNA. VP2 is also involved in attachment and entry into the host cell by interacting with host ITGA4/ITGB1. The precursor of VP2 plays an important role in capsid assembly. First, pre-VP2 and VP2 oligomers assemble to form a procapsid. Then, the pre-VP2 intermediates may be processed into VP2 proteins by proteolytic cleavage mediated by VP4 to obtain the mature virion. The final capsid is composed of pentamers and hexamers but VP2 has a natural tendency to assemble into all-pentameric structures. Therefore pre-VP2 may be required to allow formation of the hexameric structures. Functionally, protease VP4 is a serine protease that cleaves the polyprotein into its final products. Pre-VP2 is first partially cleaved, and may be completely processed by VP4 upon capsid maturation. In terms of biological role, capsid protein VP3 plays a key role in virion assembly by providing a scaffold for the capsid made of VP2. May self-assemble to form a T=4-like icosahedral inner-capsid composed of at least 180 trimers. Plays a role in genomic RNA packaging by recruiting VP1 into the capsid and interacting with the dsRNA genome segments to form a ribonucleoprotein complex. Additionally, the interaction of the VP3 C-terminal tail with VP1 removes the inherent structural blockade of the polymerase active site. Thus, VP3 can also function as a transcriptional activator. Its function is as follows. Structural peptide 1 is a small peptide derived from pre-VP2 C-terminus. It destabilizes and perforates cell membranes, suggesting a role during entry. Structural peptide 2 is a small peptide derived from pVP2 C-terminus. It is not essential for the virus viability, but viral growth is affected when missing. Functionally, structural peptide 3 is a small peptide derived from pVP2 C-terminus. It is not essential for the virus viability, but viral growth is affected when missing. In terms of biological role, structural peptide 4 is a small peptide derived from pVP2 C-terminus. It is essential for the virus viability. This chain is Structural polyprotein, found in Avian infectious bursal disease virus (strain E) (IBDV).